We begin with the raw amino-acid sequence, 284 residues long: Bifunctional protein FolD (284 aa).

Residues 166–168 and Ile-232 contribute to the NADP(+) site; that span reads GAS.

This sequence belongs to the tetrahydrofolate dehydrogenase/cyclohydrolase family. As to quaternary structure, homodimer.

The catalysed reaction is (6R)-5,10-methylene-5,6,7,8-tetrahydrofolate + NADP(+) = (6R)-5,10-methenyltetrahydrofolate + NADPH. The enzyme catalyses (6R)-5,10-methenyltetrahydrofolate + H2O = (6R)-10-formyltetrahydrofolate + H(+). The protein operates within one-carbon metabolism; tetrahydrofolate interconversion. Functionally, catalyzes the oxidation of 5,10-methylenetetrahydrofolate to 5,10-methenyltetrahydrofolate and then the hydrolysis of 5,10-methenyltetrahydrofolate to 10-formyltetrahydrofolate. The polypeptide is Bifunctional protein FolD (Azotobacter vinelandii (strain DJ / ATCC BAA-1303)).